The following is a 559-amino-acid chain: Putative helicase 22 (559 aa).

Positions 186–347 (VSDVNVIGNG…EIMGLLGKIS (162 aa)) constitute a Helicase ATP-binding domain. 199–206 (APTGSGKS) provides a ligand contact to ATP. A DEAH box motif is present at residues 300–303 (DEAH). The 143-residue stretch at 410–552 (TNKQIISKIK…KMNFIENEYN (143 aa)) folds into the Helicase C-terminal domain.

The chain is Putative helicase 22 (SIFV0022) from Sulfolobus islandicus filamentous virus (isolate Iceland/Hveragerdi) (SIFV).